We begin with the raw amino-acid sequence, 248 residues long: Meiotically up-regulated gene 110 protein (248 aa).

The helical transmembrane segment at 23–43 (LRFVFWFSVLIPIFFIALIII) threads the bilayer.

The protein localises to the membrane. Has a role in meiosis. The protein is Meiotically up-regulated gene 110 protein (mug110) of Schizosaccharomyces pombe (strain 972 / ATCC 24843) (Fission yeast).